Consider the following 533-residue polypeptide: Probable intron-encoded endonuclease 3 (533 aa).

A run of 3 helical transmembrane segments spans residues 1 to 21, 30 to 50, and 81 to 101; these read MYLS…FFGR, LITC…FFEV, and LTVA…IYSI. The interval 1–108 is ndh-5 exon 1 encoded; sequence MYLSIIILPL…YSISYMSHDP (108 aa). The ndh-5 intron 1 encoded stretch occupies residues 109–533; the sequence is RGRVRGKRVY…SISLLLGRRR (425 aa).

In the N-terminal section; belongs to the complex I subunit 5 family. The protein in the C-terminal section; belongs to the LAGLIDADG endonuclease family.

The protein resides in the mitochondrion membrane. In terms of biological role, mitochondrial DNA endonuclease involved in intron homing. The polypeptide is Probable intron-encoded endonuclease 3 (Neurospora crassa (strain ATCC 24698 / 74-OR23-1A / CBS 708.71 / DSM 1257 / FGSC 987)).